The following is a 729-amino-acid chain: Capsid protein VP1 (729 aa).

Basic residues predominate over residues 1-10 (MAPPAKRAKR). 3 disordered regions span residues 1-39 (MAPPAKRAKRGWVPPGYKYLGPGNSLDQGEPTNPSDAAA), 96-115 (LATDSEPGTSGVSRAGKRTR), and 130-185 (KLTS…VGVS). The Nuclear localization signal motif lies at 4-13 (PAKRAKRGWV). Residues 19–64 (YLGPGNSLDQGEPTNPSDAAAKEHDEAYDQYIKSGKNPYLYFSAAD) are phospholipase A2-like. Residues 25 to 35 (SLDQGEPTNPS) show a composition bias toward polar residues. Positions 132–142 (TSSAAQQSSQT) are enriched in low complexity. The segment covering 168 to 184 (GPGGSGGGGSGGGGVGV) has biased composition (gly residues). N325 is a binding site for Mg(2+).

It belongs to the parvoviridae capsid protein family.

Its subcellular location is the virion. It is found in the host nucleus. In terms of biological role, capsid protein self-assembles to form an icosahedral capsid with a T=1 symmetry, about 22 nm in diameter, and consisting of 60 copies of two size variants of the capsid proteins, VP1 and VP2, which differ by the presence of an N-terminal extension in the minor protein VP1. The capsid encapsulates the genomic ssDNA. Capsid proteins are responsible for the attachment to host cell receptors. This attachment induces virion internalization predominantly through clathrin-dependent endocytosis. Binding to the host receptors also induces capsid rearrangements leading to surface exposure of VP1 N-terminus, specifically its phospholipase A2-like region and putative nuclear localization signal(s). VP1 N-terminus might serve as a lipolytic enzyme to breach the endosomal membrane during entry into host cell and might contribute to virus transport to the nucleus. The protein is Capsid protein VP1 of Mus musculus (Mouse).